The following is a 63-amino-acid chain: Muscarinic toxin 2 (63 aa).

4 disulfides stabilise this stretch: Cys-3/Cys-22, Cys-17/Cys-42, Cys-44/Cys-55, and Cys-56/Cys-61.

Belongs to the three-finger toxin family. Short-chain subfamily. Type B muscarinic toxin sub-subfamily. As to quaternary structure, monomer. In terms of tissue distribution, expressed by the venom gland.

The protein resides in the secreted. In terms of biological role, blocks M2 muscarinic acetylcholine receptors (CHRM2). Fully blocks the binding of N-methylscopolamine (NMS) and oxotremorine-M to M2 receptors, slightly increased NMS binding to M1 receptors. This Dendroaspis angusticeps (Eastern green mamba) protein is Muscarinic toxin 2.